The chain runs to 196 residues: Elongation factor Ts (196 aa).

Residues 80–83 (TDFV) are involved in Mg(2+) ion dislocation from EF-Tu.

Belongs to the EF-Ts family.

It is found in the cytoplasm. Functionally, associates with the EF-Tu.GDP complex and induces the exchange of GDP to GTP. It remains bound to the aminoacyl-tRNA.EF-Tu.GTP complex up to the GTP hydrolysis stage on the ribosome. This is Elongation factor Ts from Desulfotalea psychrophila (strain LSv54 / DSM 12343).